Here is a 209-residue protein sequence, read N- to C-terminus: uncharacterized protein (209 aa).

A run of 3 helical transmembrane segments spans residues 10-32 (AVVI…YLAF), 37-59 (LRYV…TGLI), and 64-86 (FIYF…ILYV).

It localises to the cell membrane. This is an uncharacterized protein from Aquifex aeolicus (strain VF5).